We begin with the raw amino-acid sequence, 101 residues long: Small nuclear ribonucleoprotein Sm D3 (101 aa).

The Sm domain maps to 6–78 (IPVKLLNEAQ…IKFIVVPDLL (73 aa)).

The protein belongs to the snRNP core protein family. Component of the Sm core complex, present in spliceosomal snRNP U1, U2, U4/U6 and U5. The core complex contains SMB1, SMD1, SMD2, SMD3, SME1, SMX3 and SMX2 (Sm proteins B, D1, D2, D3, E, F and G, respectively), and is probably a heptameric ring structure. SMD3 specifically interacts with SMB1. Belongs to the CWC complex (or CEF1-associated complex), a spliceosome sub-complex reminiscent of a late-stage spliceosome composed of the U2, U5 and U6 snRNAs and at least BUD13, BUD31, BRR2, CDC40, CEF1, CLF1, CUS1, CWC2, CWC15, CWC21, CWC22, CWC23, CWC24, CWC25, CWC27, ECM2, HSH155, IST3, ISY1, LEA1, MSL1, NTC20, PRP8, PRP9, PRP11, PRP19, PRP21, PRP22, PRP45, PRP46, SLU7, SMB1, SMD1, SMD2, SMD3, SMX2, SMX3, SNT309, SNU114, SPP2, SYF1, SYF2, RSE1 and YJU2. Component of the U4/U6-U5 tri-snRNP complex composed of the U4, U6 and U5 snRNAs and at least PRP3, PRP4, PRP6, PRP8, PRP18, PRP31, PRP38, SNU13, SNU23, SNU66, SNU114, SPP381, SMB1, SMD1, SMD2, SMD3, SMX2, SMX3, LSM2, LSM3, LSM4, LSM5, LSM6, LSM7, LSM8, BRR2 and DIB1.

The protein localises to the cytoplasm. Its subcellular location is the cytosol. It localises to the nucleus. Its function is as follows. Plays a role in pre-mRNA splicing as a core component of the spliceosomal U1, U2, U4 and U5 small nuclear ribonucleoproteins (snRNPs), the building blocks of the spliceosome. Also binds telomerase RNA and is required for its accumulation. The sequence is that of Small nuclear ribonucleoprotein Sm D3 (SMD3) from Saccharomyces cerevisiae (strain ATCC 204508 / S288c) (Baker's yeast).